We begin with the raw amino-acid sequence, 420 residues long: Transcriptional adapter 2-beta (420 aa).

The ZZ-type zinc-finger motif lies at 4-59; sequence LGKKYCVYCLAEVSPLRFRCTECQDIELCPECFSAGAEIGHHRRYHGYQLVDGGRF. Zn(2+) is bound by residues Cys-9, Cys-12, Cys-23, Cys-26, Cys-32, Cys-35, His-45, and His-49. The SANT domain maps to 65–118; that stretch reads EAEGGWTSREEQLLLDAIEQFGFGNWEDMAAHVGASRTPQEVMEHYVSMYIHGN. Positions 305-335 are disordered; it reads SAEYEAARHKREKRKENKNLAGSKRGKEDGK.

Interacts with GCN5L2, SMARCA4, SMARCE1 and PAX5. Component of the TFTC-HAT complex.

The protein resides in the nucleus. In terms of biological role, coactivates PAX5-dependent transcription together with either SMARCA4 or GCN5L2. This Homo sapiens (Human) protein is Transcriptional adapter 2-beta (TADA2B).